The sequence spans 554 residues: MRSDVIKKGLERAPHRSLLKALGITDDEMRRPFIGIVSSWNEIIPGHVHLDKVVEAVKAGVRMAGGVPFVFPTIGICDGIAMDHRGMKFSLPSRELIADSIEIVASGFPFDGLVFVPNCDKITPGMMMAMGRLNIPSVLISGGPMLAGRYNGRDIDLITVFEAVGGYKVGKVDEETLKAIEDLACPGAGSCAGLFTANTMNSLAEALGIAPRGNGTVPAVHAKRLRMAKEAGMLVVELVKRDVKPRDIVTLDSFMNAVMVDLATGGSTNTVLHLKAIAESFGIDFDIKLFDELSRKIPHICNISPVGPYHIQDLDDAGGIYAVMKRLQENGLLKEDAMTIYLRKIGDLVREAKILNEDVIRPFDNPYHKEGGLGILFGNLAPEGAVAKLSGVPEKMMHHVGPAVVFEDGEEATKAILSGKIKKGDVVVIRYEGPKGGPGMREMLSPTSAIVGMGLAEDVALITDGRFSGGSHGAVIGHVSPEAAEGGPIGIVKDGDLIEIDFEKRTLNLLISDEEFERRMKEFTPLVKEVDSDYLRRYAFFVQSASKGAIFRKP.

Position 78 (Asp78) interacts with Mg(2+). Cys119 is a binding site for [2Fe-2S] cluster. Residues Asp120 and Lys121 each coordinate Mg(2+). Lys121 carries the N6-carboxylysine modification. Cys191 serves as a coordination point for [2Fe-2S] cluster. Glu442 provides a ligand contact to Mg(2+). Ser468 functions as the Proton acceptor in the catalytic mechanism.

Belongs to the IlvD/Edd family. In terms of assembly, homodimer. The cofactor is [2Fe-2S] cluster. Requires Mg(2+) as cofactor.

It carries out the reaction (2R)-2,3-dihydroxy-3-methylbutanoate = 3-methyl-2-oxobutanoate + H2O. It catalyses the reaction (2R,3R)-2,3-dihydroxy-3-methylpentanoate = (S)-3-methyl-2-oxopentanoate + H2O. It functions in the pathway amino-acid biosynthesis; L-isoleucine biosynthesis; L-isoleucine from 2-oxobutanoate: step 3/4. The protein operates within amino-acid biosynthesis; L-valine biosynthesis; L-valine from pyruvate: step 3/4. Functionally, functions in the biosynthesis of branched-chain amino acids. Catalyzes the dehydration of (2R,3R)-2,3-dihydroxy-3-methylpentanoate (2,3-dihydroxy-3-methylvalerate) into 2-oxo-3-methylpentanoate (2-oxo-3-methylvalerate) and of (2R)-2,3-dihydroxy-3-methylbutanoate (2,3-dihydroxyisovalerate) into 2-oxo-3-methylbutanoate (2-oxoisovalerate), the penultimate precursor to L-isoleucine and L-valine, respectively. In Thermotoga petrophila (strain ATCC BAA-488 / DSM 13995 / JCM 10881 / RKU-1), this protein is Dihydroxy-acid dehydratase.